The sequence spans 295 residues: Cutinase 11 (295 aa).

Positions 1–17 (MQTSALLLAAQALVASA) are cleaved as a signal peptide. A disulfide bridge links C25 with C102. Catalysis depends on residues S113, D198, and H210. C184 and C202 are disulfide-bonded. Residues 228–258 (KLNSGGSPPTTPPTTPPTTPPTTPPTTPPPS) form a disordered region. Residues 236-258 (PTTPPTTPPTTPPTTPPTTPPPS) are compositionally biased toward pro residues. The region spanning 260-295 (SCAALYGQCGGQGWNGATCCSQGTCRASNQWYSQCL) is the CBM1 domain.

The protein belongs to the cutinase family. Post-translationally, the 2 disulfide bonds play a critical role in holding the catalytic residues in juxta-position; reduction of the disulfide bridges results in the complete inactivation of the enzyme.

It localises to the secreted. It catalyses the reaction cutin + H2O = cutin monomers.. In terms of biological role, catalyzes the hydrolysis of complex carboxylic polyesters found in the cell wall of plants. May degrade cutin, a macromolecule that forms the structure of the plant cuticle. May also degrade suberin, a specialized macromolecule found in the cell wall of various plant tissues. Allows pathogenic fungi to penetrate through the cuticular barrier into the host plant during the initial stage of fungal infection. Involved in pathogenesis. This chain is Cutinase 11, found in Verticillium dahliae (Verticillium wilt).